We begin with the raw amino-acid sequence, 102 residues long: Small ribosomal subunit protein uS10 (102 aa).

Belongs to the universal ribosomal protein uS10 family. As to quaternary structure, part of the 30S ribosomal subunit.

In terms of biological role, involved in the binding of tRNA to the ribosomes. The sequence is that of Small ribosomal subunit protein uS10 from Finegoldia magna (strain ATCC 29328 / DSM 20472 / WAL 2508) (Peptostreptococcus magnus).